The following is a 324-amino-acid chain: tRNA uridine(34) hydroxylase (324 aa).

Residues 145 to 239 (NDKKTIFIDM…YVHDARKNGL (95 aa)) form the Rhodanese domain. C199 serves as the catalytic Cysteine persulfide intermediate.

This sequence belongs to the TrhO family.

The enzyme catalyses uridine(34) in tRNA + AH2 + O2 = 5-hydroxyuridine(34) in tRNA + A + H2O. Functionally, catalyzes oxygen-dependent 5-hydroxyuridine (ho5U) modification at position 34 in tRNAs. The chain is tRNA uridine(34) hydroxylase from Buchnera aphidicola subsp. Acyrthosiphon pisum (strain APS) (Acyrthosiphon pisum symbiotic bacterium).